A 369-amino-acid polypeptide reads, in one-letter code: ATP-dependent (S)-NAD(P)H-hydrate dehydratase (369 aa).

Positions Leu14 to Leu356 constitute a YjeF C-terminal domain. (6S)-NADPHX contacts are provided by residues Gly126 and Asn179–Arg185. Residues Lys231 to Asp235 and Gly250 to Gly259 each bind ATP. Asp260 contributes to the (6S)-NADPHX binding site. The span at Gly284–Lys306 shows a compositional bias: basic and acidic residues. The tract at residues Gly284–Arg307 is disordered.

It belongs to the NnrD/CARKD family. It depends on Mg(2+) as a cofactor.

The protein localises to the cytoplasm. The enzyme catalyses (6S)-NADHX + ATP = ADP + phosphate + NADH + H(+). The catalysed reaction is (6S)-NADPHX + ATP = ADP + phosphate + NADPH + H(+). Catalyzes the dehydration of the S-form of NAD(P)HX at the expense of ATP, which is converted to ADP. Together with NAD(P)HX epimerase, which catalyzes the epimerization of the S- and R-forms, the enzyme allows the repair of both epimers of NAD(P)HX, a damaged form of NAD(P)H that is a result of enzymatic or heat-dependent hydration. This is ATP-dependent (S)-NAD(P)H-hydrate dehydratase from Emericella nidulans (strain FGSC A4 / ATCC 38163 / CBS 112.46 / NRRL 194 / M139) (Aspergillus nidulans).